The primary structure comprises 369 residues: Glycine oxidase (369 aa).

FAD-binding positions include 14–15, 34–35, 42–43, 47–49, and valine 174; these read II, ES, AT, and AGM. Substrate-binding residues include arginine 302 and arginine 329. 327 to 333 contributes to the FAD binding site; sequence HFRNGIL.

Belongs to the DAO family. ThiO subfamily. In terms of assembly, homotetramer. FAD is required as a cofactor.

The enzyme catalyses glycine + O2 + H2O = glyoxylate + H2O2 + NH4(+). It carries out the reaction glyphosate + O2 + H2O = aminomethylphosphonate + glyoxylate + H2O2 + H(+). The catalysed reaction is N-ethylglycine + O2 + H2O = ethylamine + glyoxylate + H2O2. It catalyses the reaction sarcosine + O2 + H2O = methylamine + glyoxylate + H2O2. The enzyme catalyses D-alanine + O2 + H2O = pyruvate + H2O2 + NH4(+). The protein operates within cofactor biosynthesis; thiamine diphosphate biosynthesis. In terms of biological role, catalyzes the FAD-dependent oxidative deamination of glycine, leading to glyoxylate, ammonia and hydrogen peroxide. Is also able to act on various amines and D-amino acids to yield the corresponding alpha-keto acids, ammonia/amine, and hydrogen peroxide. Can also oxidize the herbicide glyphosate (N-phosphonomethylglycine), and thus may be involved in the degradation pathway that allows B.licheniformis J33-8 to grow with glyphosate as the sole source of carbon. Is essential for thiamine biosynthesis since the oxidation of glycine catalyzed by ThiO generates the glycine imine intermediate (dehydroglycine) required for the biosynthesis of the thiazole ring of thiamine pyrophosphate. This chain is Glycine oxidase, found in Bacillus licheniformis.